The sequence spans 437 residues: Epsilon-sarcoglycan (437 aa).

Residues 1-317 lie on the Extracellular side of the membrane; it reads MLLFWWWELG…LKSRDYYTDF (317 aa). Residue Asn-200 is glycosylated (N-linked (GlcNAc...) asparagine). A helical membrane pass occupies residues 318–338; it reads LVTLAVPSAVALVLFLILAYI. Over 339–437 the chain is Cytoplasmic; the sequence is MCCRREGVEK…QPQTTGKWYP (99 aa).

This sequence belongs to the sarcoglycan alpha/epsilon family. Post-translationally, N-glycosylated. Ubiquitinated, leading to its degradation by the proteasome. Identified in all tissues tested. Expression highest in lung and placenta, moderate in brain, heart and skeletal muscle, low in kidney and liver. Also detected in embryo.

It is found in the cell membrane. The protein resides in the sarcolemma. It localises to the golgi apparatus. Its subcellular location is the cell projection. The protein localises to the dendrite. It is found in the cytoplasm. The protein resides in the cytoskeleton. Functionally, component of the sarcoglycan complex, a subcomplex of the dystrophin-glycoprotein complex which forms a link between the F-actin cytoskeleton and the extracellular matrix. The protein is Epsilon-sarcoglycan (Sgce) of Mus musculus (Mouse).